A 268-amino-acid polypeptide reads, in one-letter code: MNNFLKVSLLAAAVAVSLTACQKDEKTAANTAEVKAEASKPAEAPKAEAKSFEEQSGYAIGLSMGRYIANTLERQQELGIKLDNSVILKGVTDGLGKEAKMTDEEIQKVLQQYDAKINELTKAKADKDAVENQKKGEEYLAANAKKEGVKSTESGLQYQVEKMGTGAKPKATDIVKVHYTGTLTDGTKFDSSVDRGEPATFPLNQVIPGWTEGVQLMPVGSKFKFFLPSKLAYGEHGAGSIPANAVLVFDVELLAIEKPAADGDNAKK.

The N-terminal stretch at 1–20 (MNNFLKVSLLAAAVAVSLTA) is a signal peptide. The PPIase FKBP-type domain maps to 172–257 (TDIVKVHYTG…VFDVELLAIE (86 aa)).

It belongs to the FKBP-type PPIase family.

It is found in the periplasm. It carries out the reaction [protein]-peptidylproline (omega=180) = [protein]-peptidylproline (omega=0). Its function is as follows. PPIases accelerate the folding of proteins. It catalyzes the cis-trans isomerization of proline imidic peptide bonds in oligopeptides. FkpA probably acts in the folding of extracytoplasmic proteins. The protein is FKBP-type peptidyl-prolyl cis-trans isomerase FkpA (fkpA) of Aeromonas hydrophila.